Consider the following 395-residue polypeptide: E3 ubiquitin-protein ligase RDUF1 (395 aa).

Disordered regions lie at residues 1-22 and 107-130; these read MMPN…TTTT and PVIV…EGDG. The span at 9–22 shows a compositional bias: low complexity; the sequence is TITPTTESTTTTTT. A compositionally biased stretch (basic and acidic residues) spans 121-130; it reads ERVENEEGDG. The RING-type; atypical zinc-finger motif lies at 215-256; the sequence is CAVCTEVFEAGIEGREMPCKHIFHGDCIVPWLSIRNSCPVCR.

As to expression, expressed in root tips, leaf tips, junction of carpels and pedicels, stigma, anthers, pollen, vasculature of sepals and petals, immature seeds and embryos.

It is found in the cytoplasm. The protein localises to the cytosol. The protein resides in the nucleus. The enzyme catalyses S-ubiquitinyl-[E2 ubiquitin-conjugating enzyme]-L-cysteine + [acceptor protein]-L-lysine = [E2 ubiquitin-conjugating enzyme]-L-cysteine + N(6)-ubiquitinyl-[acceptor protein]-L-lysine.. The protein operates within protein modification; protein ubiquitination. In terms of biological role, E3 ubiquitin-protein ligase involved in the positive regulation of abscisic acid-dependent drought stress responses. Involved in the positive regulation of responses to salt and osmotic stresses during seed germination and early seedling development. Possesses E3 ubiquitin ligase activity in vitro. In Arabidopsis thaliana (Mouse-ear cress), this protein is E3 ubiquitin-protein ligase RDUF1.